The chain runs to 1153 residues: Nitric oxide synthase (1153 aa).

(6R)-L-erythro-5,6,7,8-tetrahydrobiopterin is bound at residue Ser-3. Cys-82 is a binding site for heme b. Residues Gln-145, Trp-254, and Asn-264 each contribute to the L-arginine site. Position 358 (Phe-358) interacts with (6R)-L-erythro-5,6,7,8-tetrahydrobiopterin. Positions Pro-397–Met-417 are calmodulin-binding. Residues Cys-427–Phe-610 enclose the Flavodoxin-like domain. Val-556–Val-587 is a binding site for FMN. The 244-residue stretch at Lys-660–Pro-903 folds into the FAD-binding FR-type domain. FAD is bound by residues Tyr-697–Ala-708 and Leu-836–Ser-846. Ile-911–Arg-929 is a binding site for NADP(+). Repeat copies occupy residues Glu-934–Cys-940, Glu-941–Cys-947, Glu-948–Cys-954, Glu-955–Cys-961, Glu-962–Cys-968, Glu-969–Cys-975, Glu-976–Cys-982, Glu-983–Cys-989, Glu-990–Cys-996, Glu-997–Trp-1003, and Glu-1004–Cys-1010. The interval Glu-934–Cys-1010 is 11 X 7 AA tandem repeats of E-[NTR]-[ST]-[IM]-[PLQ]-[SP]-[CW]. An NADP(+)-binding site is contributed by Gly-1089–Val-1104.

It belongs to the NOS family. The cofactor is heme b. FAD serves as cofactor. Requires FMN as cofactor. Expressed in the central nervous system, in the serotonergic cerebral giant cells. The isoform Long and isoform Short are expressed equally in the CNS.

The enzyme catalyses 2 L-arginine + 3 NADPH + 4 O2 + H(+) = 2 L-citrulline + 2 nitric oxide + 3 NADP(+) + 4 H2O. With respect to regulation, stimulated by calcium/calmodulin. In terms of biological role, produces nitric oxide (NO) which is a messenger molecule with diverse functions throughout the body. The polypeptide is Nitric oxide synthase (NOS) (Lymnaea stagnalis (Great pond snail)).